The following is a 295-amino-acid chain: Phosphatidylserine decarboxylase proenzyme (295 aa).

Residues D113, H169, and S256 each act as charge relay system; for autoendoproteolytic cleavage activity in the active site. The active-site Schiff-base intermediate with substrate; via pyruvic acid; for decarboxylase activity is S256. S256 carries the pyruvic acid (Ser); by autocatalysis modification.

Belongs to the phosphatidylserine decarboxylase family. PSD-B subfamily. Prokaryotic type II sub-subfamily. In terms of assembly, heterodimer of a large membrane-associated beta subunit and a small pyruvoyl-containing alpha subunit. Pyruvate serves as cofactor. In terms of processing, is synthesized initially as an inactive proenzyme. Formation of the active enzyme involves a self-maturation process in which the active site pyruvoyl group is generated from an internal serine residue via an autocatalytic post-translational modification. Two non-identical subunits are generated from the proenzyme in this reaction, and the pyruvate is formed at the N-terminus of the alpha chain, which is derived from the carboxyl end of the proenzyme. The autoendoproteolytic cleavage occurs by a canonical serine protease mechanism, in which the side chain hydroxyl group of the serine supplies its oxygen atom to form the C-terminus of the beta chain, while the remainder of the serine residue undergoes an oxidative deamination to produce ammonia and the pyruvoyl prosthetic group on the alpha chain. During this reaction, the Ser that is part of the protease active site of the proenzyme becomes the pyruvoyl prosthetic group, which constitutes an essential element of the active site of the mature decarboxylase.

It localises to the cell membrane. The catalysed reaction is a 1,2-diacyl-sn-glycero-3-phospho-L-serine + H(+) = a 1,2-diacyl-sn-glycero-3-phosphoethanolamine + CO2. It functions in the pathway phospholipid metabolism; phosphatidylethanolamine biosynthesis; phosphatidylethanolamine from CDP-diacylglycerol: step 2/2. Catalyzes the formation of phosphatidylethanolamine (PtdEtn) from phosphatidylserine (PtdSer). The protein is Phosphatidylserine decarboxylase proenzyme of Clostridium botulinum (strain Langeland / NCTC 10281 / Type F).